Here is a 271-residue protein sequence, read N- to C-terminus: CAAX prenyl protease 2 (271 aa).

At 1–9 (MISSYKYNP) the chain is on the extracellular side. A helical membrane pass occupies residues 10–30 (KLYFLSTFVVTYILWFTGAYL). The Cytoplasmic portion of the chain corresponds to 31-38 (SFSSTYSG). Residues 39 to 59 (IYMLIMLPGLMAPFIISTILI) form a helical membrane-spanning segment. The Extracellular portion of the chain corresponds to 60-82 (AKSKNNELKKDFINRLFNLKLIN). A helical membrane pass occupies residues 83-105 (LKTIPVVFLLMPAVILLSILLSI). Residues 106–125 (PFGGSISQFQFSGGFSFSTD) lie on the Cytoplasmic side of the membrane. The chain crosses the membrane as a helical span at residues 126-149 (FVPVLFLLLLAATFEELGWRGYAF). The active-site Proton donor/acceptor is Glu140. The Extracellular portion of the chain corresponds to 150–159 (DSLQSRYSLF). The helical transmembrane segment at 160–179 (KASILFGIFWSLWHFPLIFV) threads the bilayer. Residue His173 is the Proton donor/acceptor of the active site. Topologically, residues 180–192 (NNSYQYEIFNQSI) are cytoplasmic. A helical transmembrane segment spans residues 193–213 (WYGLNFFLSILPMGIIITWMC). Over 214–219 (LKNRKS) the chain is Extracellular. Residues 220–237 (IILAIIFHFLINLNQELL) traverse the membrane as a helical segment. Residues 238–243 (AITQDT) are Cytoplasmic-facing. A helical membrane pass occupies residues 244–263 (KIIETGVLFLVAAAIILYDK). Residues 264–271 (KMFFEKLG) lie on the Extracellular side of the membrane.

The protein belongs to the peptidase U48 family.

The protein resides in the cell membrane. The catalysed reaction is Hydrolyzes the peptide bond -P2-(S-farnesyl or geranylgeranyl)C-P1'-P2'-P3'-COOH where P1' and P2' are amino acids with aliphatic sidechains and P3' is any C-terminal residue.. Activity is unaffected by metalloprotease inhibitors 5 mM EDTA and 5 mM Zn(2+). Activity partially inhibited by 1,10-phenanthroline and 1,7-phenanthroline. In terms of biological role, protease involved in the processing of a variety of prenylated proteins containing the C-terminal CAAX motif, where C is a cysteine modified with an isoprenoid lipid, A is an aliphatic amino acid and X is any C-terminal amino acid. Proteolytically removes the C-terminal three residues of farnesylated proteins, leaving the prenylated cysteine as the new C-terminus. Hydrolysis depends on a farnesylated cysteine residue and no activity is shown towards geranylgeranylated peptides. This Methanococcus maripaludis (strain DSM 14266 / JCM 13030 / NBRC 101832 / S2 / LL) protein is CAAX prenyl protease 2.